We begin with the raw amino-acid sequence, 230 residues long: MPGCLPADSVGTMASLMPLSPYLSPTVLLLVSCDLGFVRADRPPSPVNVTVTHLRANSATVSWDVPEGNIVIGYSISQQRQNGPGQRVIREVNTTTRACALWGLAEDSDYTVQVRSIGLRGESPPGPRVHFRTLKGSDRLPSNSSSPGDITVEGLDGERPLQTGEVVIIVVVLLMWAAVIGLFCRQYDIIKDNDSNNNPKEKGKGPEQSPQGRPVGTRQKKSPSINTIDV.

The signal sequence occupies residues 1 to 40 (MPGCLPADSVGTMASLMPLSPYLSPTVLLLVSCDLGFVRA). Residues 41–163 (DRPPSPVNVT…GLDGERPLQT (123 aa)) are Extracellular-facing. Positions 43-136 (PPSPVNVTVT…PRVHFRTLKG (94 aa)) constitute a Fibronectin type-III domain. 2 N-linked (GlcNAc...) asparagine glycosylation sites follow: Asn48 and Asn143. The disordered stretch occupies residues 118–156 (GLRGESPPGPRVHFRTLKGSDRLPSNSSSPGDITVEGLD). Residues 164–184 (GEVVIIVVVLLMWAAVIGLFC) form a helical membrane-spanning segment. The Cytoplasmic portion of the chain corresponds to 185 to 230 (RQYDIIKDNDSNNNPKEKGKGPEQSPQGRPVGTRQKKSPSINTIDV). Residues 193 to 205 (NDSNNNPKEKGKG) show a composition bias toward basic and acidic residues. The interval 193 to 230 (NDSNNNPKEKGKGPEQSPQGRPVGTRQKKSPSINTIDV) is disordered.

Its subcellular location is the membrane. It localises to the secreted. In terms of biological role, has anti-inflammatory properties. In the colon, acts on macrophages to down-regulate inflammation. May suppress osteoclastogenesis and mature osteoclast resorptive function. In white adipose tissue, decreases local inflammation, via interaction with GPR116. Also required for proper systemic glucose tolerance, specifically sensitizing white adipocytes to insulin and promoting glucose uptake. The insulin sensitizing function in adipose tissue is mediated by interaction with ADGRF5/GPR116 and activation of cAMP signaling. The chain is Fibronectin type III domain-containing protein 4 (FNDC4) from Bos taurus (Bovine).